The following is a 645-amino-acid chain: Chaperone protein DnaK (645 aa).

Residue threonine 200 is modified to Phosphothreonine; by autocatalysis. The disordered stretch occupies residues 603 to 645; the sequence is AYSAQKDSGTSTDSTASDTSGNPEERVVDSEYQEIKKDDEDKK. The segment covering 609-623 has biased composition (low complexity); that stretch reads DSGTSTDSTASDTSG. The segment covering 625–645 has biased composition (basic and acidic residues); the sequence is PEERVVDSEYQEIKKDDEDKK.

It belongs to the heat shock protein 70 family.

Its function is as follows. Acts as a chaperone. In Anaplasma marginale (strain St. Maries), this protein is Chaperone protein DnaK.